The following is a 156-amino-acid chain: Small ribosomal subunit protein uS7 (156 aa).

The protein belongs to the universal ribosomal protein uS7 family. Part of the 30S ribosomal subunit. Contacts proteins S9 and S11.

One of the primary rRNA binding proteins, it binds directly to 16S rRNA where it nucleates assembly of the head domain of the 30S subunit. Is located at the subunit interface close to the decoding center, probably blocks exit of the E-site tRNA. The chain is Small ribosomal subunit protein uS7 from Shewanella loihica (strain ATCC BAA-1088 / PV-4).